The sequence spans 147 residues: Mannitol-specific cryptic phosphotransferase enzyme IIA component (147 aa).

Residues 5–147 enclose the PTS EIIA type-2 domain; sequence DYFPESSISV…KQLADIISRG (143 aa). Residue His67 is the Tele-phosphohistidine intermediate of the active site. His67 carries the post-translational modification Phosphohistidine; by HPr.

The protein localises to the cytoplasm. In terms of biological role, the phosphoenolpyruvate-dependent sugar phosphotransferase system (sugar PTS), a major carbohydrate active transport system, catalyzes the phosphorylation of incoming sugar substrates concomitantly with their translocation across the cell membrane. The enzyme II CmtAB PTS system is involved in D-mannitol transport. The chain is Mannitol-specific cryptic phosphotransferase enzyme IIA component (cmtB) from Escherichia coli O157:H7.